The chain runs to 88 residues: Large ribosomal subunit protein bL27 (88 aa).

The tract at residues Met1–Leu21 is disordered.

The protein belongs to the bacterial ribosomal protein bL27 family.

This chain is Large ribosomal subunit protein bL27, found in Pelotomaculum thermopropionicum (strain DSM 13744 / JCM 10971 / SI).